Consider the following 170-residue polypeptide: Cathelicidin antimicrobial peptide (170 aa).

The signal sequence occupies residues 1–30 (MKTQMDGHSLGRWSLVLLLLGLVMPLAIVA). The propeptide at 31-131 (QVLSYKEAVL…DISCDKDNRR (101 aa)) is cathelin-like domain (CLD). Disulfide bonds link Cys-86–Cys-97 and Cys-108–Cys-125. The active core stretch occupies residues 150–162 (FKRIVQRIKDFLR).

The protein belongs to the cathelicidin family. In terms of assembly, monomer, homodimer or homotrimer (in vitro). Oligomerizes as tetra- or hexamer in solution (in vitro). In terms of processing, proteolytically cleaved by proteinase PRTN3 into antibacterial peptide LL-37. Proteolytically cleaved by cathepsin CTSG and neutrophil elastase ELANE. Resistant to proteolytic degradation in solution, and when bound to both zwitterionic (mimicking mammalian membranes) and negatively charged membranes (mimicking bacterial membranes). Post-translationally, after secretion onto the skin surface, the CAMP gene product is processed by a serine protease-dependent mechanism into multiple novel antimicrobial peptides distinct from and shorter than cathelicidin LL-37. These peptides show enhanced antimicrobial action, acquiring the ability to kill skin pathogens such as S.aureus, E.coli and C.albicans. These peptides have lost the ability to stimulate CXCL8/IL8 release from keratinocytes. The peptides act synergistically, killing bacteria at lower concentrations when present together, and maintain activity at increased salt condition.

The protein localises to the secreted. It is found in the vesicle. Antimicrobial protein that is an integral component of the innate immune system. Binds to bacterial lipopolysaccharides (LPS). Acts via neutrophil N-formyl peptide receptors to enhance the release of CXCL2. Postsecretory processing generates multiple cathelicidin antimicrobial peptides with various lengths which act as a topical antimicrobial defense in sweat on skin. The unprocessed precursor form, cathelicidin antimicrobial peptide, inhibits the growth of Gram-negative E.coli and E.aerogenes with efficiencies comparable to that of the mature peptide LL-37 (in vitro). In terms of biological role, antimicrobial peptide that is an integral component of the innate immune system. Binds to bacterial lipopolysaccharides (LPS). Causes membrane permeabilization by forming transmembrane pores (in vitro). Causes lysis of E.coli. Exhibits antimicrobial activity against Gram-negative bacteria such as P.aeruginosa, S.typhimurium, E.aerogenes, E.coli and P.syringae, Gram-positive bacteria such as L.monocytogenes, S.epidermidis, S.pyogenes and S.aureus, as well as vancomycin-resistant enterococci (in vitro). Exhibits antimicrobial activity against methicillin-resistant S.aureus, P.mirabilis, and C.albicans in low-salt media, but not in media containing 100 mM NaCl (in vitro). Forms chiral supramolecular assemblies with quinolone signal (PQS) molecules of P.aeruginosa, which may lead to interference of bacterial quorum signaling and perturbance of bacterial biofilm formation. May form supramolecular fiber-like assemblies on bacterial membranes. Induces cytokine and chemokine producation as well as TNF/TNFA and CSF2/GMCSF production in normal human keratinocytes. Exhibits hemolytic activity against red blood cells. Functionally, exhibits antimicrobial activity against E.coli and B.megaterium (in vitro). The sequence is that of Cathelicidin antimicrobial peptide from Pongo pygmaeus (Bornean orangutan).